We begin with the raw amino-acid sequence, 217 residues long: 3,4-dihydroxy-2-butanone 4-phosphate synthase (217 aa).

D-ribulose 5-phosphate-binding positions include 37–38, Asp-42, 150–154, and Glu-174; these read RE and RRGHT. Glu-38 serves as a coordination point for Mg(2+). His-153 lines the Mg(2+) pocket.

Belongs to the DHBP synthase family. Homodimer. It depends on Mg(2+) as a cofactor. The cofactor is Mn(2+).

The enzyme catalyses D-ribulose 5-phosphate = (2S)-2-hydroxy-3-oxobutyl phosphate + formate + H(+). Its pathway is cofactor biosynthesis; riboflavin biosynthesis; 2-hydroxy-3-oxobutyl phosphate from D-ribulose 5-phosphate: step 1/1. Catalyzes the conversion of D-ribulose 5-phosphate to formate and 3,4-dihydroxy-2-butanone 4-phosphate. The sequence is that of 3,4-dihydroxy-2-butanone 4-phosphate synthase from Shewanella oneidensis (strain ATCC 700550 / JCM 31522 / CIP 106686 / LMG 19005 / NCIMB 14063 / MR-1).